Here is a 301-residue protein sequence, read N- to C-terminus: Ornithine carbamoyltransferase (301 aa).

Residues Arg-100 and 127–130 contribute to the carbamoyl phosphate site; that span reads HPCQ. Residues Asn-158, Asp-221, and 225–226 each bind L-ornithine; that span reads SM. Residues Cys-260 and Arg-288 each contribute to the carbamoyl phosphate site.

It belongs to the aspartate/ornithine carbamoyltransferase superfamily. OTCase family. In terms of assembly, the enzyme is present as a mixture of trimers and dodecamers, with the relative proportions of the two forms depending on the salt concentration. In addition, the trimeric fraction could reassociate into dodecamers when the salt concentration is increased. It appears that in vivo, the main fraction is in the dodecameric form.

The protein resides in the cytoplasm. The catalysed reaction is carbamoyl phosphate + L-ornithine = L-citrulline + phosphate + H(+). Its pathway is amino-acid biosynthesis; L-arginine biosynthesis; L-arginine from L-ornithine and carbamoyl phosphate: step 1/3. Its activity is regulated as follows. Inhibited by excess of arginine and by the bisubstrate delta-N-phosphonoacetyl-L-ornithine (PALO). Reversibly catalyzes the transfer of the carbamoyl group from carbamoyl phosphate (CP) to the N(epsilon) atom of ornithine (ORN) to produce L-citrulline, which is a substrate for argininosuccinate synthetase, the enzyme involved in the final step in arginine biosynthesis. This is Ornithine carbamoyltransferase from Moritella abyssi.